The following is a 452-amino-acid chain: UDP-N-acetylmuramoylalanine--D-glutamate ligase (452 aa).

119 to 125 (GSNGKTT) contributes to the ATP binding site.

This sequence belongs to the MurCDEF family.

The protein localises to the cytoplasm. It catalyses the reaction UDP-N-acetyl-alpha-D-muramoyl-L-alanine + D-glutamate + ATP = UDP-N-acetyl-alpha-D-muramoyl-L-alanyl-D-glutamate + ADP + phosphate + H(+). It functions in the pathway cell wall biogenesis; peptidoglycan biosynthesis. Cell wall formation. Catalyzes the addition of glutamate to the nucleotide precursor UDP-N-acetylmuramoyl-L-alanine (UMA). The chain is UDP-N-acetylmuramoylalanine--D-glutamate ligase from Streptococcus pyogenes serotype M4 (strain MGAS10750).